Reading from the N-terminus, the 652-residue chain is Vacuolar fusion protein MON1 homolog A (652 aa).

A disordered region spans residues 102-141 (MQRKRSSECLDGTLTPSDGQSMERAESPTPGMAQGMEPGA). 2 positions are modified to phosphoserine: Ser128 and Ser153. Thr158 bears the Phosphothreonine mark. A disordered region spans residues 158–185 (TESEDGAASGDSHKEGTRGPPPLPTDMR). Ser188 carries the phosphoserine modification. Residues 211-245 (PGSSEDWLEPPGAVGRPATEPPREGTTEGDEEDAT) form a disordered region.

This sequence belongs to the MON1/SAND family. In terms of assembly, interacts with CCZ1. Found in a complex with RMC1, CCZ1, MON1A and MON1B. The MON1A-CCZ1B complex interacts with RIMOC1. The MON1A-CCZ1B complex interacts with RAB7A and this interaction is enhanced in the presence of RIMOC1.

Functionally, plays an important role in membrane trafficking through the secretory apparatus. Not involved in endocytic trafficking to lysosomes. Acts in concert with CCZ1, as a guanine exchange factor (GEF) for RAB7, promotes the exchange of GDP to GTP, converting it from an inactive GDP-bound form into an active GTP-bound form. This Homo sapiens (Human) protein is Vacuolar fusion protein MON1 homolog A (MON1A).